The sequence spans 108 residues: Peptidyl-prolyl cis-trans isomerase FKBP1A (108 aa).

Positions 20–108 (GQTVVVHYVG…TFDVELLRLE (89 aa)) constitute a PPIase FKBP-type domain.

It belongs to the FKBP-type PPIase family. FKBP1 subfamily.

It is found in the cytoplasm. The enzyme catalyses [protein]-peptidylproline (omega=180) = [protein]-peptidylproline (omega=0). Its activity is regulated as follows. Inhibited by both FK506 and rapamycin. Its function is as follows. Keeps in an inactive conformation TGFBR1, the TGF-beta type I serine/threonine kinase receptor, preventing TGF-beta receptor activation in absence of ligand. May modulate the RYR1 calcium channel activity. PPIases accelerate the folding of proteins. It catalyzes the cis-trans isomerization of proline imidic peptide bonds in oligopeptides. The protein is Peptidyl-prolyl cis-trans isomerase FKBP1A (fkbp1a) of Xenopus laevis (African clawed frog).